Here is a 267-residue protein sequence, read N- to C-terminus: 4-hydroxy-tetrahydrodipicolinate reductase (267 aa).

Residues 12–17 (GPRGRM), 100–102 (GTT), and 126–129 (APNF) each bind NAD(+). Catalysis depends on His-156, which acts as the Proton donor/acceptor. His-157 provides a ligand contact to (S)-2,3,4,5-tetrahydrodipicolinate. Lys-160 acts as the Proton donor in catalysis. 166 to 167 (GT) contacts (S)-2,3,4,5-tetrahydrodipicolinate.

It belongs to the DapB family.

Its subcellular location is the cytoplasm. The enzyme catalyses (S)-2,3,4,5-tetrahydrodipicolinate + NAD(+) + H2O = (2S,4S)-4-hydroxy-2,3,4,5-tetrahydrodipicolinate + NADH + H(+). It carries out the reaction (S)-2,3,4,5-tetrahydrodipicolinate + NADP(+) + H2O = (2S,4S)-4-hydroxy-2,3,4,5-tetrahydrodipicolinate + NADPH + H(+). The protein operates within amino-acid biosynthesis; L-lysine biosynthesis via DAP pathway; (S)-tetrahydrodipicolinate from L-aspartate: step 4/4. In terms of biological role, catalyzes the conversion of 4-hydroxy-tetrahydrodipicolinate (HTPA) to tetrahydrodipicolinate. The sequence is that of 4-hydroxy-tetrahydrodipicolinate reductase from Bacillus licheniformis (strain ATCC 14580 / DSM 13 / JCM 2505 / CCUG 7422 / NBRC 12200 / NCIMB 9375 / NCTC 10341 / NRRL NRS-1264 / Gibson 46).